Here is a 213-residue protein sequence, read N- to C-terminus: Orotate phosphoribosyltransferase (213 aa).

K26 lines the 5-phospho-alpha-D-ribose 1-diphosphate pocket. An orotate-binding site is contributed by 34-35 (FF). 5-phospho-alpha-D-ribose 1-diphosphate-binding positions include 72-73 (YK), R99, K100, K103, H105, and 124-132 (DDVITAGTA). T128 and R156 together coordinate orotate.

The protein belongs to the purine/pyrimidine phosphoribosyltransferase family. PyrE subfamily. In terms of assembly, homodimer. Mg(2+) serves as cofactor.

It carries out the reaction orotidine 5'-phosphate + diphosphate = orotate + 5-phospho-alpha-D-ribose 1-diphosphate. The protein operates within pyrimidine metabolism; UMP biosynthesis via de novo pathway; UMP from orotate: step 1/2. Functionally, catalyzes the transfer of a ribosyl phosphate group from 5-phosphoribose 1-diphosphate to orotate, leading to the formation of orotidine monophosphate (OMP). This is Orotate phosphoribosyltransferase from Pseudomonas syringae pv. syringae (strain B728a).